A 169-amino-acid chain; its full sequence is ALK and LTK ligand 2a (169 aa).

A signal peptide spans 1 to 25; sequence MRALRAPVLVMGLVLLICTAAQSDA. Residues 45-68 are disordered; sequence ENSADDESAQKTESAPEPKDTHHL. The segment covering 52-67 has biased composition (basic and acidic residues); that stretch reads SAQKTESAPEPKDTHH. Cystine bridges form between Cys-130/Cys-166 and Cys-144/Cys-153.

Belongs to the ALKAL family. In terms of assembly, homodimer. As to expression, expressed at high level in the notochord and iridophore stripes of the trunk, as well as in the eye and swim bladder.

Its subcellular location is the secreted. It localises to the cell membrane. Cytokine that acts as a physiological ligand for receptor tyrosine kinases LTK and ALK. Required for neural crest cell differentiation and iridophore development during embryonic iridophore development and adult stripe development by acting as a receptor for LTK. The protein is ALK and LTK ligand 2a of Danio rerio (Zebrafish).